The chain runs to 421 residues: RNase J-like protein (421 aa).

Positions 55, 57, 59, 60, 132, 153, and 389 each coordinate Zn(2+).

Belongs to the metallo-beta-lactamase superfamily. RNA-metabolizing metallo-beta-lactamase-like family. In terms of assembly, forms homodimers on heating to 60 degrees Celsius which may be the active form. Requires Zn(2+) as cofactor.

With respect to regulation, inhibited by imidazole. In terms of biological role, a 5'-3' exoribonuclease with a strong reference for 5'-monophosphorylated RNA and no endoribonuclease activty. The protein is RNase J-like protein of Methanocaldococcus jannaschii (strain ATCC 43067 / DSM 2661 / JAL-1 / JCM 10045 / NBRC 100440) (Methanococcus jannaschii).